Reading from the N-terminus, the 419-residue chain is Alpha-galactosidase A (419 aa).

The N-terminal stretch at 1 to 31 is a signal peptide; sequence MKLLSRDTRLVCELALCPLALVFWSILGVRA. Cystine bridges form between cysteine 52–cysteine 94 and cysteine 56–cysteine 63. Asparagine 139 carries N-linked (GlcNAc...) asparagine glycosylation. Cysteine 142 and cysteine 172 are joined by a disulfide. Aspartate 170 serves as the catalytic Nucleophile. A Phosphotyrosine modification is found at tyrosine 186. Residue asparagine 192 is glycosylated (N-linked (GlcNAc...) asparagine). The cysteines at positions 202 and 223 are disulfide-linked. 203 to 207 contacts substrate; it reads EWPLY. Asparagine 215 carries an N-linked (GlcNAc...) asparagine glycan. Aspartate 231 serves as the catalytic Proton donor. The cysteines at positions 378 and 382 are disulfide-linked.

Belongs to the glycosyl hydrolase 27 family. As to quaternary structure, homodimer.

The protein localises to the lysosome. The enzyme catalyses Hydrolysis of terminal, non-reducing alpha-D-galactose residues in alpha-D-galactosides, including galactose oligosaccharides, galactomannans and galactolipids.. It catalyses the reaction a globoside Gb3Cer (d18:1(4E)) + H2O = a beta-D-Gal-(1-&gt;4)-beta-D-Glc-(1&lt;-&gt;1)-Cer(d18:1(4E)) + D-galactose. The catalysed reaction is a globoside Gb3Cer + H2O = a beta-D-galactosyl-(1-&gt;4)-beta-D-glucosyl-(1&lt;-&gt;1)-ceramide + D-galactose. Galactosylgalactosylglucosylceramidase activity is stimulated by saposin B and ammonium chloride. Functionally, catalyzes the hydrolysis of glycosphingolipids and participates in their degradation in the lysosome. The protein is Alpha-galactosidase A of Mus musculus (Mouse).